The sequence spans 178 residues: Ribosome maturation factor RimP (178 aa).

Belongs to the RimP family.

Its subcellular location is the cytoplasm. Functionally, required for maturation of 30S ribosomal subunits. The chain is Ribosome maturation factor RimP from Mycolicibacterium gilvum (strain PYR-GCK) (Mycobacterium gilvum (strain PYR-GCK)).